A 495-amino-acid chain; its full sequence is Sulfhydryl oxidase 2 (495 aa).

Residues 1-15 form the signal peptide; sequence MSLVHLLLFAGLVIA. Residues 29–164 enclose the Thioredoxin domain; sequence EISDQKDKAV…LLNWINKQIG (136 aa). N-linked (GlcNAc...) asparagine glycosylation is present at Asn-41. Catalysis depends on nucleophile residues Cys-66 and Cys-69. Residues Cys-66 and Cys-69 are joined by a disulfide bond. Asn-182, Asn-257, Asn-266, and Asn-292 each carry an N-linked (GlcNAc...) asparagine glycan. Cys-287 and Cys-299 are oxidised to a cystine. Residues 290–392 form the ERV/ALR sulfhydryl oxidase domain; that stretch reads SKNDTRGFSC…GDPKFPKIIW (103 aa). FAD contacts are provided by residues Arg-295, Trp-302, His-306, Glu-336, His-340, 363-370, Lys-389, and Trp-392; that span reads WSTHNKVN. Cysteines 334 and 337 form a disulfide. Cys-398 and Cys-401 are oxidised to a cystine.

FAD is required as a cofactor.

It localises to the secreted. The catalysed reaction is 2 R'C(R)SH + O2 = R'C(R)S-S(R)CR' + H2O2. Its function is as follows. Catalyzes the oxidation of sulfhydryl groups in peptide and protein thiols to disulfides with the reduction of oxygen to hydrogen peroxide. May contribute to disulfide bond formation in a variety of secreted proteins. The sequence is that of Sulfhydryl oxidase 2 (QSOX2) from Arabidopsis thaliana (Mouse-ear cress).